A 40-amino-acid polypeptide reads, in one-letter code: Large ribosomal subunit protein bL36 (40 aa).

This sequence belongs to the bacterial ribosomal protein bL36 family.

The sequence is that of Large ribosomal subunit protein bL36 from Corynebacterium jeikeium (strain K411).